Here is a 322-residue protein sequence, read N- to C-terminus: Ferrochelatase (322 aa).

Residues H194 and E275 each coordinate Fe cation.

Belongs to the ferrochelatase family.

The protein localises to the cytoplasm. The catalysed reaction is heme b + 2 H(+) = protoporphyrin IX + Fe(2+). It functions in the pathway porphyrin-containing compound metabolism; protoheme biosynthesis; protoheme from protoporphyrin-IX: step 1/1. Functionally, catalyzes the ferrous insertion into protoporphyrin IX. This is Ferrochelatase from Proteus mirabilis (strain HI4320).